Reading from the N-terminus, the 147-residue chain is UPF0735 ACT domain-containing protein Cthe_1377 (147 aa).

In terms of domain architecture, ACT spans 71-146; the sequence is TLFFTVEDYA…GVKRQEILAR (76 aa).

The protein belongs to the UPF0735 family.

The sequence is that of UPF0735 ACT domain-containing protein Cthe_1377 from Acetivibrio thermocellus (strain ATCC 27405 / DSM 1237 / JCM 9322 / NBRC 103400 / NCIMB 10682 / NRRL B-4536 / VPI 7372) (Clostridium thermocellum).